The following is a 343-amino-acid chain: Transmembrane protein 120A (343 aa).

Topologically, residues 1–132 are cytoplasmic; the sequence is MQSPPPDPLG…KQAKFAYKDE (132 aa). Lys-130 contacts CoA. The helical transmembrane segment at 133–152 threads the bilayer; it reads YEKFKLYLTIILIVISFTCR. The Extracellular segment spans residues 153 to 158; the sequence is FLLNSR. The chain crosses the membrane as a helical span at residues 159-177; the sequence is VTDAAFNFLLVWYYCTLTI. At 178 to 190 the chain is on the cytoplasmic side; it reads RESILINNGSRIK. CoA-binding residues include Ser-187 and Arg-188. A helical transmembrane segment spans residues 191-209; the sequence is GWWVFHHYVSTFLSGVMLT. Over 210-218 the chain is Extracellular; that stretch reads WPDGLMYQK. A helical membrane pass occupies residues 219–240; the sequence is FRNQFLSFSMYQSFVQFLQYYY. Residues Gln-237, Tyr-240, Gln-241, and His-283 each coordinate CoA. Residues 241–270 are Cytoplasmic-facing; that stretch reads QSGCLYRLRALGERHTMDLTVEGFQSWMWR. The helical transmembrane segment at 271–294 threads the bilayer; it reads GLTFLLPFLFFGHFWQLFNALTLF. The Extracellular portion of the chain corresponds to 295–304; the sequence is NLARDPECKE. Residues 305–330 form a helical membrane-spanning segment; that stretch reads WQVLMCGLPFLLLFLGNFFTTLRVVH. Residues 331 to 343 lie on the Cytoplasmic side of the membrane; the sequence is QKFHSQQHGSKKD. Lys-332 contacts CoA.

The protein belongs to the TMEM120 family. In terms of assembly, homodimer. Forms heterooligomer with TMEM120B. Interacts with PKD2; TMEM120A inhibits PKD2 channel activity through the physical association of PKD2 with TMEM120A.

Its subcellular location is the cell membrane. It localises to the nucleus inner membrane. The protein resides in the endoplasmic reticulum. Multifunctional protein involved in mechanosensation, and plays an essential role in lipid metabolism and adipocyte differentiation. May function as a potential ion channel involved in sensing mechanical stimuli. Mediates the mechanosensitivity of the PKD2-TMEM120A channel complex through direct physical interaction. TMEM120A seems to affect mechanosensation by inhibiting PIEZO2 channels, possibly by altering cellular lipid content. TMEM120A is structurally similar to a lipid-modifying enzyme, ELOVL7, and contains a bound coenzyme A molecule, which suggests it might function as an enzyme in lipid metabolism. Additionnaly, implicated in innate immune response against Zika virus. Acts as a key activator of the antiviral signaling involving STING1. This is Transmembrane protein 120A from Rattus norvegicus (Rat).